An 87-amino-acid polypeptide reads, in one-letter code: Small ribosomal subunit protein uS15c (87 aa).

Belongs to the universal ribosomal protein uS15 family. Part of the 30S ribosomal subunit.

The protein localises to the plastid. It is found in the chloroplast. The sequence is that of Small ribosomal subunit protein uS15c (rps15) from Solanum tuberosum (Potato).